A 177-amino-acid polypeptide reads, in one-letter code: MSIEVANESGIDVSEAELVSVARFVIAKMDVNPCAELSMLLLDTAAMADLHMRWMDLPGPTDVMSFPMDELEPGGRPDAPEPGPSMLGDIVLCPEFAAEQAAAAGHSLGHELALLTIHGVLHLLGYDHAEPDEEKEMFALQDRLLEEWVADQVEAYQHDRQDEKDRRLLDKSRYFDL.

Zn(2+) contacts are provided by His-118, His-122, and His-128.

It belongs to the endoribonuclease YbeY family. Requires Zn(2+) as cofactor.

Its subcellular location is the cytoplasm. Its function is as follows. Single strand-specific metallo-endoribonuclease involved in late-stage 70S ribosome quality control and in maturation of the 3' terminus of the 16S rRNA. This chain is Endoribonuclease YbeY, found in Mycobacterium bovis (strain ATCC BAA-935 / AF2122/97).